The sequence spans 288 residues: Diaminopimelate epimerase (288 aa).

Residues N14 and N67 each coordinate substrate. C76 acts as the Proton donor in catalysis. Residues G77–N78, N166, N199, and E217–R218 contribute to the substrate site. The Proton acceptor role is filled by C226. Residue G227–T228 participates in substrate binding.

Belongs to the diaminopimelate epimerase family. Homodimer.

It localises to the cytoplasm. The enzyme catalyses (2S,6S)-2,6-diaminopimelate = meso-2,6-diaminopimelate. It participates in amino-acid biosynthesis; L-lysine biosynthesis via DAP pathway; DL-2,6-diaminopimelate from LL-2,6-diaminopimelate: step 1/1. In terms of biological role, catalyzes the stereoinversion of LL-2,6-diaminopimelate (L,L-DAP) to meso-diaminopimelate (meso-DAP), a precursor of L-lysine and an essential component of the bacterial peptidoglycan. This is Diaminopimelate epimerase from Bacillus cereus (strain AH820).